Here is a 138-residue protein sequence, read N- to C-terminus: Large ribosomal subunit protein bL19 (138 aa).

The protein belongs to the bacterial ribosomal protein bL19 family.

Functionally, this protein is located at the 30S-50S ribosomal subunit interface and may play a role in the structure and function of the aminoacyl-tRNA binding site. The protein is Large ribosomal subunit protein bL19 of Leptospira interrogans serogroup Icterohaemorrhagiae serovar copenhageni (strain Fiocruz L1-130).